Consider the following 249-residue polypeptide: 5'-nucleotidase SurE (249 aa).

The a divalent metal cation site is built by D8, D9, S39, and N91.

Belongs to the SurE nucleotidase family. A divalent metal cation serves as cofactor.

It localises to the cytoplasm. It catalyses the reaction a ribonucleoside 5'-phosphate + H2O = a ribonucleoside + phosphate. Its function is as follows. Nucleotidase that shows phosphatase activity on nucleoside 5'-monophosphates. This is 5'-nucleotidase SurE from Pseudomonas putida (strain ATCC 47054 / DSM 6125 / CFBP 8728 / NCIMB 11950 / KT2440).